We begin with the raw amino-acid sequence, 1219 residues long: Regulator of telomere elongation helicase 1 (1219 aa).

The region spanning 7–296 (NGVTVDFPFQ…TKAAQQGEPH (290 aa)) is the Helicase ATP-binding domain. Residue 42–49 (SPTGTGKT) coordinates ATP. The [4Fe-4S] cluster site is built by C145, C163, C172, and C207. Positions 151–167 (KKQESNHLQIHLCRKKV) match the Nuclear localization signal motif. The DEAH box signature appears at 250–253 (DEAH). Disordered stretches follow at residues 287–306 (TKAA…SPSP), 757–786 (PAPA…FFST), 839–877 (EHSE…GRKK), 979–1005 (RPEH…PDPK), 1017–1054 (DPQE…RAGK), 1132–1151 (CTDL…PQEE), and 1159–1219 (LTHR…EWGL). Residues 757-766 (PAPAPRATAP) show a composition bias toward low complexity. Residues 863–873 (SEKRPAEEPRG) are compositionally biased toward basic and acidic residues. A Nuclear localization signal motif is present at residues 871–877 (PRGGRKK). The segment covering 1176-1185 (KTQSKISSFL) has biased composition (polar residues). A PIP-box motif is present at residues 1178–1185 (QSKISSFL). The segment covering 1200–1219 (AGPSQSSGPPHGPAASEWGL) has biased composition (low complexity).

This sequence belongs to the helicase family. RAD3/XPD subfamily. Interacts with TERF1. Interacts (via PIP-box) with PCNA; the interaction is direct and essential for suppressing telomere fragility. Interacts with MMS19; the interaction mediates the association of RTEL1 with the cytosolic iron-sulfur protein assembly (CIA) complex.

Its subcellular location is the nucleus. It catalyses the reaction ATP + H2O = ADP + phosphate + H(+). A probable ATP-dependent DNA helicase implicated in telomere-length regulation, DNA repair and the maintenance of genomic stability. Acts as an anti-recombinase to counteract toxic recombination and limit crossover during meiosis. Regulates meiotic recombination and crossover homeostasis by physically dissociating strand invasion events and thereby promotes noncrossover repair by meiotic synthesis dependent strand annealing (SDSA) as well as disassembly of D loop recombination intermediates. Also disassembles T loops and prevents telomere fragility by counteracting telomeric G4-DNA structures, which together ensure the dynamics and stability of the telomere. This Homo sapiens (Human) protein is Regulator of telomere elongation helicase 1.